Consider the following 129-residue polypeptide: Putative membrane protein insertion efficiency factor (129 aa).

This sequence belongs to the UPF0161 family.

The protein resides in the cell inner membrane. In terms of biological role, could be involved in insertion of integral membrane proteins into the membrane. In Rhodopseudomonas palustris (strain ATCC BAA-98 / CGA009), this protein is Putative membrane protein insertion efficiency factor.